The sequence spans 376 residues: S-adenosylmethionine synthase (376 aa).

Histidine 14 is a binding site for ATP. Residue aspartate 16 coordinates Mg(2+). Glutamate 42 is a K(+) binding site. The L-methionine site is built by glutamate 55 and glutamine 98. A flexible loop region spans residues 98-108 (QSPEIALGISS). ATP is bound by residues 158–160 (DGK), 224–225 (RF), aspartate 233, 239–240 (RK), alanine 256, and lysine 260. Aspartate 233 contacts L-methionine. Residue lysine 264 participates in L-methionine binding.

Belongs to the AdoMet synthase family. As to quaternary structure, homotetramer; dimer of dimers. Mg(2+) is required as a cofactor. It depends on K(+) as a cofactor.

The protein resides in the cytoplasm. It carries out the reaction L-methionine + ATP + H2O = S-adenosyl-L-methionine + phosphate + diphosphate. It participates in amino-acid biosynthesis; S-adenosyl-L-methionine biosynthesis; S-adenosyl-L-methionine from L-methionine: step 1/1. Catalyzes the formation of S-adenosylmethionine (AdoMet) from methionine and ATP. The overall synthetic reaction is composed of two sequential steps, AdoMet formation and the subsequent tripolyphosphate hydrolysis which occurs prior to release of AdoMet from the enzyme. The polypeptide is S-adenosylmethionine synthase (Aquifex aeolicus (strain VF5)).